The chain runs to 96 residues: Co-chaperonin GroES (96 aa).

It belongs to the GroES chaperonin family. Heptamer of 7 subunits arranged in a ring. Interacts with the chaperonin GroEL.

The protein resides in the cytoplasm. Functionally, together with the chaperonin GroEL, plays an essential role in assisting protein folding. The GroEL-GroES system forms a nano-cage that allows encapsulation of the non-native substrate proteins and provides a physical environment optimized to promote and accelerate protein folding. GroES binds to the apical surface of the GroEL ring, thereby capping the opening of the GroEL channel. The chain is Co-chaperonin GroES from Albidiferax ferrireducens (strain ATCC BAA-621 / DSM 15236 / T118) (Rhodoferax ferrireducens).